Consider the following 734-residue polypeptide: Photosystem I P700 chlorophyll a apoprotein A2 (734 aa).

A run of 8 helical transmembrane segments spans residues 46 to 69 (IFASHFGQLAIIFLWTSGNLFHVA), 135 to 158 (LYTGALSLLILSAIFLIAGWLHLQ), 175 to 199 (LNHHLSGLFGVSSLAWTGHLVHVAI), 273 to 291 (IAHHHLAIAVVFIIAGHMY), 330 to 353 (LHFQLGLALASLGVITSLVAQHMY), 369 to 395 (AALYTHHQYIAGFIMTGAFAHGAIFLI), 417 to 439 (AIISHLSWASLFLGFHTLGLYVH), and 517 to 535 (FLVHHAIALGLHTTTLILV). [4Fe-4S] cluster contacts are provided by cysteine 559 and cysteine 568. The next 2 helical transmembrane spans lie at 575–596 (AFYSAVFWMLNTIGWVTLYWHW) and 643–665 (LSVWAWMFLFGHLVWAIGFMFLI). Residues histidine 654, methionine 662, and tyrosine 670 each contribute to the chlorophyll a site. Residue tryptophan 671 participates in phylloquinone binding. A helical transmembrane segment spans residues 707 to 727 (LVGLAHFSVGYIFTYAAFLIA).

The protein belongs to the PsaA/PsaB family. As to quaternary structure, the PsaA/B heterodimer binds the P700 chlorophyll special pair and subsequent electron acceptors. PSI consists of a core antenna complex that captures photons, and an electron transfer chain that converts photonic excitation into a charge separation. The eukaryotic PSI reaction center is composed of at least 11 subunits. P700 is a chlorophyll a/chlorophyll a' dimer, A0 is one or more chlorophyll a, A1 is one or both phylloquinones and FX is a shared 4Fe-4S iron-sulfur center. serves as cofactor.

It localises to the plastid. The protein localises to the chloroplast thylakoid membrane. The catalysed reaction is reduced [plastocyanin] + hnu + oxidized [2Fe-2S]-[ferredoxin] = oxidized [plastocyanin] + reduced [2Fe-2S]-[ferredoxin]. PsaA and PsaB bind P700, the primary electron donor of photosystem I (PSI), as well as the electron acceptors A0, A1 and FX. PSI is a plastocyanin-ferredoxin oxidoreductase, converting photonic excitation into a charge separation, which transfers an electron from the donor P700 chlorophyll pair to the spectroscopically characterized acceptors A0, A1, FX, FA and FB in turn. Oxidized P700 is reduced on the lumenal side of the thylakoid membrane by plastocyanin. This Huperzia lucidula (Shining clubmoss) protein is Photosystem I P700 chlorophyll a apoprotein A2.